We begin with the raw amino-acid sequence, 707 residues long: MAGVSFSGHRLELLAAYEEVIREESAADWALYTYEDGSDDLKLAASGEGGLQELSGHFENQKVMYGFCSVKDSQAALPKYVLINWVGEDVPDARKCACASHVAKVAEFFQGVDVIVNASSVEDIDAGAIGQRLSNGLARLSSPVLHRLRLREDENAEPVGTTYQKTDAAVEMKRINREQFWEQAKKEEELRKEEERKKALDARLRFEQERMEQERQEQEERERRYREREQQIEEHRRKQQSLEAEEAKRRLKDQSIFGDQRDEEEESQMKKSESEVEEAAAIIAQRPDNPREFFRQQERVASASGGSCDAPSPFNHRPGRPYCPFIKASDSGPSSSSSSSSSPPRTPFPYITCHRTPNLSSSLPCSHLDSHRRMAPTPIPTRSPSDSSTASTPITEQIERALDEVTSSQPPPPPPPPPPAQEAQESAPRLDGEEVCKEAKVAAAPQVWAGCAEEPPRAQEPPLLQSSPTEDLMCTESPEQAVLAASPEPDASVTSVADAHAADTIETTTATTATTIADNVTPAAASLIDLWPGNGEEASTPQAEPRVPTPPSGAEASLAEVPLLNEAAQEPLPPVGEGCANLLNFDELPEPPATFCDPEEEAEGEPLAASQVLTMPSALEEVDQVLEQELEPEPHLLTNGETTQKEGTQQASEGYFSQSQEEEFAQSEEPCAKAPPPVFYNKPPEIDITCWDADPVPEEEEGFEGGD.

N-acetylalanine is present on Ala-2. One can recognise an ADF-H domain in the interval 3–134; it reads GVSFSGHRLE…DAGAIGQRLS (132 aa). Residues Ser-141 and Ser-142 each carry the phosphoserine modification. Positions 209 to 236 are enriched in basic and acidic residues; the sequence is ERMEQERQEQEERERRYREREQQIEEHR. Disordered stretches follow at residues 209-438, 452-497, 531-557, 582-609, and 630-707; these read ERME…VCKE, AEEP…TSVA, WPGN…AEAS, LLNF…PLAA, and LEPE…EGGD. Ser-241 carries the phosphoserine modification. Basic and acidic residues predominate over residues 288–298; sequence DNPREFFRQQE. Residues 329–343 show a composition bias toward low complexity; sequence SDSGPSSSSSSSSSP. Ser-342 bears the Phosphoserine mark. A compositionally biased stretch (polar residues) spans 355 to 364; that stretch reads RTPNLSSSLP. Phosphothreonine occurs at positions 377 and 381. Polar residues predominate over residues 380–395; the sequence is PTRSPSDSSTASTPIT. Phosphoserine is present on residues Ser-383, Ser-385, and Ser-391. The residue at position 392 (Thr-392) is a Phosphothreonine. Residues 409–420 show a composition bias toward pro residues; that stretch reads QPPPPPPPPPPA. The segment covering 428-438 has biased composition (basic and acidic residues); the sequence is PRLDGEEVCKE. Ser-467 bears the Phosphoserine mark. Phosphothreonine is present on Thr-549. Over residues 639-652 the composition is skewed to polar residues; sequence NGETTQKEGTQQAS. A Phosphoserine modification is found at Ser-659. Residues 695–707 are compositionally biased toward acidic residues; it reads PVPEEEEGFEGGD.

In terms of assembly, interacts with RUFY. Interacts with CXCR4; this interaction is enhanced by antigenic stimulation. Interacts (via ADF-H domain) with ZMYND8 (via N-terminus); the interaction leads to sequestering of ZMYND8 in the cytoplasm. ISGylated. Brain neurons.

It is found in the cytoplasm. Its subcellular location is the cell projection. The protein localises to the dendrite. The protein resides in the cell cortex. It localises to the cell junction. It is found in the growth cone. Actin cytoskeleton-organizing protein that plays a role in the formation of cell projections. Required for actin polymerization at immunological synapses (IS) and for the recruitment of the chemokine receptor CXCR4 to IS. Plays a role in dendritic spine morphogenesis and organization, including the localization of the dopamine receptor DRD1 to the dendritic spines. Involved in memory-related synaptic plasticity in the hippocampus. In Rattus norvegicus (Rat), this protein is Drebrin (Dbn1).